The following is a 622-amino-acid chain: MRGLLCWPVLLLLLQPWETQLQLTGPRCHTGPLDLVFVIDSSRSVRPFEFETMRQFLMGLLRGLNVGPNATRVGVIQYSSQVQSVFPLRAFSRREDMERAIRDLVPLAQGTMTGLAIQYAMNVAFSVAEGARPPEERVPRVAVIVTDGRPQDRVAEVAAQARARGIEIYAVGVQRADVGSLRAMASPPLDEHVFLVESFDLIQEFGLQFQSRLCGKDQCAEGGHGCQHQCVNAWAMFHCTCNPGYKLAADNKSCLAIDLCAEGTHGCEHHCVNSPGSYFCHCQVGFVLQQDQRSCRAIDYCSFGNHSCQHECVSTPGGPRCHCREGHDLQPDGRSCQVRDLCNGVDHGCEFQCVSEGLSYRCLCPEGRQLQADGKSCNRCREGHVDLVLLVDGSKSVRPQNFELVKRFVNQIVDFLDVSPEGTRVGLVQFSSRVRTEFPLGRYGTAAEVKQAVLAVEYMERGTMTGLALRHMVEHSFSEAQGARPRALNVPRVGLVFTDGRSQDDISVWAARAKEEGIVMYAVGVGKAVEAELREIASEPAELHVSYAPDFGTMTHLLENLRGSICPEEGISAGTELRSPCECESLVEFQGRTLGALESLTLNLAQLTARLEDLENQLANQK.

The N-terminal stretch at 1–18 is a signal peptide; that stretch reads MRGLLCWPVLLLLLQPWE. The VWFA 1 domain occupies 34-213; it reads DLVFVIDSSR…EFGLQFQSRL (180 aa). N-linked (GlcNAc...) asparagine glycosylation is present at Asn69. The region spanning 215–255 is the EGF-like 1; incomplete domain; sequence GKDQCAEGGHGCQHQCVNAWAMFHCTCNPGYKLAADNKSCL. 12 disulfides stabilise this stretch: Cys219/Cys230, Cys226/Cys239, Cys241/Cys254, Cys260/Cys271, Cys267/Cys280, Cys282/Cys295, Cys301/Cys312, Cys308/Cys321, Cys323/Cys336, Cys342/Cys353, Cys349/Cys362, and Cys364/Cys377. A glycan (N-linked (GlcNAc...) asparagine) is linked at Asn251. EGF-like domains are found at residues 256–292, 297–337, and 342–377; these read AIDL…QQDQ, AIDY…RSCQ, and CNGV…GKSC. A glycan (N-linked (GlcNAc...) asparagine) is linked at Asn305. In terms of domain architecture, VWFA 2 spans 386-561; the sequence is DLVLLVDGSK…GTMTHLLENL (176 aa). Residues 591 to 622 adopt a coiled-coil conformation; it reads GRTLGALESLTLNLAQLTARLEDLENQLANQK.

In terms of assembly, interacts with COMP. In terms of tissue distribution, embryonic kidney, lung and placenta.

The protein resides in the secreted. Major component of the extracellular matrix of cartilage. The protein is Matrilin-4 (MATN4) of Homo sapiens (Human).